The primary structure comprises 89 residues: Cell division topological specificity factor (89 aa).

Belongs to the MinE family.

In terms of biological role, prevents the cell division inhibition by proteins MinC and MinD at internal division sites while permitting inhibition at polar sites. This ensures cell division at the proper site by restricting the formation of a division septum at the midpoint of the long axis of the cell. In Klebsiella pneumoniae subsp. pneumoniae (strain ATCC 700721 / MGH 78578), this protein is Cell division topological specificity factor.